The following is a 383-amino-acid chain: MHTLHLIFEPRPKAPRLHALIVADAFQLPANPSRLLQTTKLECLAASMQRILSHYQPRVRTNHSVLSSRAVAQHLGSDNADPPRPETILYAQNHDPFGRKSSFLPRCADNGLCHADANPVSEVPESPPSTVKSSGDASVSDKDDDGLMDRCMLHDGAKGLLAVPRSKVQTSSGQVAETSPPQLSRKVIQNATSSSLYIKVERSKPSSRKRPSCIALETDEKASGPRIRARLGAKVQPSLGQVVEKFKRQATQHDTGSSMCIKPESARSKPIRRKRPAGAALETDEKASGPQTRARARAEASEASEASSPLPIARSARPYSAAEDDILQTLVARGLAWEEIEKEFGLRFAKRTMRSLQMRWSRKLKLTAPSTRCSKRKRSSASL.

Disordered stretches follow at residues Asn118–Asp145 and Gln249–Pro318. Over residues Pro119–Ser134 the composition is skewed to low complexity. Positions Pro318–Leu364 constitute a Myb-like domain.

In terms of biological role, myb-like domain-containing protein; part of the subtelomeric hrmA-associated cluster (HAC) containing genes that alter the hyphal surface (such as reduced total chitin or increased beta-glucan exposure) and perturb inter-hyphal interactions within the developing biofilms, resulting in a loss of vertically aligned polarized growing filaments. Consequently, this hypoxia-typic morphotype (called H-MORPH) with altered biofilm architecture leads to increased hypoxia fitness, increased host inflammation, rapid disease progression, and mortality in a murine model of invasive aspergillosis. This chain is Subtelomeric hrmA-associated cluster protein AFUB_078970, found in Aspergillus fumigatus (strain CBS 144.89 / FGSC A1163 / CEA10) (Neosartorya fumigata).